The sequence spans 92 residues: Phospholemman (92 aa).

An N-terminal signal peptide occupies residues 1 to 20 (MASLSHILVLCVGLLAMVNA). Over 21–35 (EAPQEHDPFTYDYQS) the chain is Extracellular. The chain crosses the membrane as a helical span at residues 36-56 (LRIGGLIIAGILFILGILIVL). Residues 57 to 92 (SRRCRCKFNQQQRTGEPDEEEGTFRSSIRRLSTRRR) lie on the Cytoplasmic side of the membrane. The S-palmitoyl cysteine moiety is linked to residue cysteine 60. Cysteine 62 is subject to S-glutathionyl cysteine; alternate. Cysteine 62 is lipidated: S-palmitoyl cysteine; alternate. The interval 65 to 92 (NQQQRTGEPDEEEGTFRSSIRRLSTRRR) is disordered. At threonine 79 the chain carries Phosphothreonine. Serine 82 carries the post-translational modification Phosphoserine. Serine 83 bears the Phosphoserine; by PKA and PKC mark. Positions 83–92 (SIRRLSTRRR) are enriched in basic residues. Serine 88 is modified (phosphoserine; by PKA). Position 89 is a phosphothreonine; by PKC (threonine 89).

It belongs to the FXYD family. Homotetramer. Monomer. Regulatory subunit of the sodium/potassium-transporting ATPase (NKA) which is composed of a catalytic alpha subunit, an auxiliary non-catalytic beta subunit and an additional regulatory subunit. The monomeric form associates with NKA while the oligomeric form does not. Interacts with the catalytic alpha-1 subunit ATP1A1. Also interacts with the catalytic alpha-2 and alpha-3 subunits ATP1A2 and ATP1A3. Very little interaction with ATP1A1, ATP1A2 or ATP1A3 when phosphorylated at Ser-83. Interacts with the non-catalytic beta-1 subunit ATP1B1. Oxidative stress decreases interaction with ATP1A1 but increases interaction with ATP1B1. Post-translationally, major plasma membrane substrate for cAMP-dependent protein kinase (PKA) and protein kinase C (PKC) in several different tissues. Phosphorylated in response to insulin and adrenergic stimulation. Phosphorylation at Ser-88 stimulates sodium/potassium-transporting ATPase activity while the unphosphorylated form inhibits sodium/potassium-transporting ATPase activity. Phosphorylation increases tetramerization, decreases binding to ATP1A1 and reduces inhibition of ATP1A1 activity. Phosphorylation at Ser-83 leads to greatly reduced interaction with ATP1A1, ATP1A2 and ATP1A3. May be phosphorylated by DMPK. In terms of processing, palmitoylation increases half-life and stability and is enhanced upon phosphorylation at Ser-88 by PKA. In the brain, detected in cerebellum and choroid plexus (at protein level).

Its subcellular location is the cell membrane. It localises to the sarcolemma. The protein resides in the apical cell membrane. The protein localises to the membrane. It is found in the caveola. Its subcellular location is the T-tubule. Its function is as follows. Associates with and regulates the activity of the sodium/potassium-transporting ATPase (NKA) which transports Na(+) out of the cell and K(+) into the cell. Inhibits NKA activity in its unphosphorylated state and stimulates activity when phosphorylated. Reduces glutathionylation of the NKA beta-1 subunit ATP1B1, thus reversing glutathionylation-mediated inhibition of ATP1B1. Contributes to female sexual development by maintaining the excitability of neurons which secrete gonadotropin-releasing hormone. The chain is Phospholemman from Bos taurus (Bovine).